The primary structure comprises 101 residues: Small ribosomal subunit protein uS14 (101 aa).

Positions 32–62 (GDAKRSDAEREAARLGLQKLPRNANPTRQRN) are disordered. The segment covering 33–44 (DAKRSDAEREAA) has biased composition (basic and acidic residues).

It belongs to the universal ribosomal protein uS14 family. In terms of assembly, part of the 30S ribosomal subunit. Contacts proteins S3 and S10.

In terms of biological role, binds 16S rRNA, required for the assembly of 30S particles and may also be responsible for determining the conformation of the 16S rRNA at the A site. The sequence is that of Small ribosomal subunit protein uS14 from Verminephrobacter eiseniae (strain EF01-2).